The chain runs to 338 residues: Aspartate carbamoyltransferase catalytic subunit (338 aa).

Residues arginine 59 and threonine 60 each coordinate carbamoyl phosphate. Lysine 87 lines the L-aspartate pocket. Positions 109, 142, and 145 each coordinate carbamoyl phosphate. The L-aspartate site is built by arginine 182 and arginine 253. Glycine 294 and proline 295 together coordinate carbamoyl phosphate.

This sequence belongs to the aspartate/ornithine carbamoyltransferase superfamily. ATCase family. In terms of assembly, heterododecamer (2C3:3R2) of six catalytic PyrB chains organized as two trimers (C3), and six regulatory PyrI chains organized as three dimers (R2).

The catalysed reaction is carbamoyl phosphate + L-aspartate = N-carbamoyl-L-aspartate + phosphate + H(+). The protein operates within pyrimidine metabolism; UMP biosynthesis via de novo pathway; (S)-dihydroorotate from bicarbonate: step 2/3. In terms of biological role, catalyzes the condensation of carbamoyl phosphate and aspartate to form carbamoyl aspartate and inorganic phosphate, the committed step in the de novo pyrimidine nucleotide biosynthesis pathway. The polypeptide is Aspartate carbamoyltransferase catalytic subunit (Prochlorococcus marinus (strain MIT 9515)).